Reading from the N-terminus, the 340-residue chain is RNA 3'-terminal phosphate cyclase (340 aa).

Residues glutamine 102 and 284–288 (FLGDQ) each bind ATP. Histidine 308 (tele-AMP-histidine intermediate) is an active-site residue.

The protein belongs to the RNA 3'-terminal cyclase family. Type 1 subfamily.

It localises to the cytoplasm. It carries out the reaction a 3'-end 3'-phospho-ribonucleotide-RNA + ATP = a 3'-end 2',3'-cyclophospho-ribonucleotide-RNA + AMP + diphosphate. Its function is as follows. Catalyzes the conversion of 3'-phosphate to a 2',3'-cyclic phosphodiester at the end of RNA. The mechanism of action of the enzyme occurs in 3 steps: (A) adenylation of the enzyme by ATP; (B) transfer of adenylate to an RNA-N3'P to produce RNA-N3'PP5'A; (C) and attack of the adjacent 2'-hydroxyl on the 3'-phosphorus in the diester linkage to produce the cyclic end product. The biological role of this enzyme is unknown but it is likely to function in some aspects of cellular RNA processing. The chain is RNA 3'-terminal phosphate cyclase from Thermococcus onnurineus (strain NA1).